Consider the following 922-residue polypeptide: ATP-dependent helicase fft3 (922 aa).

Disordered regions lie at residues 139 to 177 (EPKM…APHR) and 198 to 224 (PLSS…DDSN). Residues 153 to 166 (DSLPLSLSSQSLSS) show a composition bias toward low complexity. Residues 207 to 223 (PEADDDSNDDMYSDDDS) show a composition bias toward acidic residues. S213 and S219 each carry phosphoserine. The region spanning 399-567 (YLLYELKLAG…ISLLAFILPH (169 aa)) is the Helicase ATP-binding domain. ATP is bound at residue 412–419 (DEMGLGKT). A DEGH box motif is present at residues 518 to 521 (DEGH). S617 carries the phosphoserine modification. The 158-residue stretch at 765-922 (KLKKLLTNAV…ETVEAEDDDD (158 aa)) folds into the Helicase C-terminal domain.

This sequence belongs to the SNF2/RAD54 helicase family. As to quaternary structure, interacts with the GDP-bound form of spi1.

It localises to the nucleus. The protein localises to the chromosome. The enzyme catalyses ATP + H2O = ADP + phosphate + H(+). Functionally, DNA helicase that possesses intrinsic ATP-dependent nucleosome-remodeling activity and is required for heterochromatin organization. Required for maintaining a heterochromatin chromatin structure at centromeres and subtelomeres by protecting these regions from euchromatin assembly. Enhances the nucleotide exchange activity of the pim1 guanine nucleotide exchange factor and abolishes histone-H3-mediated RanGAP inhibition. Involved in the construction of the centromeres. The protein is ATP-dependent helicase fft3 (fft3) of Schizosaccharomyces pombe (strain 972 / ATCC 24843) (Fission yeast).